The primary structure comprises 415 residues: Tyrosine--tRNA ligase (415 aa).

Y34 contributes to the L-tyrosine binding site. A 'HIGH' region motif is present at residues 39-48 (PTADSLHLGH). L-tyrosine is bound by residues Y164 and Q168. The 'KMSKS' region signature appears at 226–230 (KFGKS). K229 is an ATP binding site. One can recognise an S4 RNA-binding domain in the interval 348-415 (KNVVDFLVDG…KKKYFLGKVK (68 aa)).

This sequence belongs to the class-I aminoacyl-tRNA synthetase family. TyrS type 1 subfamily. In terms of assembly, homodimer.

The protein resides in the cytoplasm. It catalyses the reaction tRNA(Tyr) + L-tyrosine + ATP = L-tyrosyl-tRNA(Tyr) + AMP + diphosphate + H(+). Functionally, catalyzes the attachment of tyrosine to tRNA(Tyr) in a two-step reaction: tyrosine is first activated by ATP to form Tyr-AMP and then transferred to the acceptor end of tRNA(Tyr). The sequence is that of Tyrosine--tRNA ligase from Leuconostoc mesenteroides subsp. mesenteroides (strain ATCC 8293 / DSM 20343 / BCRC 11652 / CCM 1803 / JCM 6124 / NCDO 523 / NBRC 100496 / NCIMB 8023 / NCTC 12954 / NRRL B-1118 / 37Y).